The sequence spans 206 residues: Small ribosomal subunit protein uS4 (206 aa).

One can recognise an S4 RNA-binding domain in the interval 96–156; sequence CRLDNVVYRM…EKAKNQLRIV (61 aa).

The protein belongs to the universal ribosomal protein uS4 family. In terms of assembly, part of the 30S ribosomal subunit. Contacts protein S5. The interaction surface between S4 and S5 is involved in control of translational fidelity.

Functionally, one of the primary rRNA binding proteins, it binds directly to 16S rRNA where it nucleates assembly of the body of the 30S subunit. In terms of biological role, with S5 and S12 plays an important role in translational accuracy. The chain is Small ribosomal subunit protein uS4 from Pseudomonas fluorescens (strain ATCC BAA-477 / NRRL B-23932 / Pf-5).